Here is an 897-residue protein sequence, read N- to C-terminus: Interference hedgehog (897 aa).

The signal sequence occupies residues 1–26 (MSVTRGHKSTPSLLLLFLSVLTSLLA). The Extracellular portion of the chain corresponds to 27–702 (AIPVLQANAP…THNETFNMNP (676 aa)). 4 consecutive Ig-like C2-type domains span residues 40–147 (PGVR…ATIS), 148–235 (GDKI…RRLE), 244–336 (PSAA…YIQL), and 342–429 (PRIV…LQVN). 3 disulfide bridges follow: Cys63-Cys125, Cys169-Cys217, and Cys272-Cys320. Asn96 and Asn99 each carry an N-linked (GlcNAc...) asparagine glycan. N-linked (GlcNAc...) asparagine glycans are attached at residues Asn296, Asn351, Asn393, and Asn467. Cys363 and Cys411 are joined by a disulfide. The disordered stretch occupies residues 434–468 (QAGDGMGTGGMGRSSNRNAHNRKQKQMVPPSAPNV). Fibronectin type-III domains are found at residues 462–571 (PPSA…LQRG) and 579–674 (VPEL…TQRP). Residues Arg498, Lys504, and Lys506 each contribute to the heparin site. The N-linked (GlcNAc...) asparagine glycan is linked to Asn530. Position 545 (Arg545) interacts with heparin. Asn561 is a glycosylation site (N-linked (GlcNAc...) asparagine). Residues 666–682 (LKQGRTQRPRSSTTAQP) are compositionally biased toward polar residues. The tract at residues 666-694 (LKQGRTQRPRSSTTAQPTMHTVDTTTPTH) is disordered. The span at 683–694 (TMHTVDTTTPTH) shows a compositional bias: low complexity. Asn695 carries N-linked (GlcNAc...) asparagine glycosylation. The helical transmembrane segment at 703-723 (LLTGTISGGALLILLVISACL) threads the bilayer. Residues 724–897 (CLCKRRHSRG…SSGSLNSVGV (174 aa)) are Cytoplasmic-facing. 2 disordered regions span residues 773 to 793 (AQQQ…DSQD) and 819 to 849 (MSSS…NLNQ). The segment covering 774–784 (QQQQQQLQQQH) has biased composition (low complexity).

It belongs to the immunoglobulin superfamily. IHOG family. In terms of assembly, homodimer. Heterotetramer; 2 iHog chains bind 2 hh chains when facilitated by heparin, heparin is required to promote high-affinity interactions between hh and iHog.

It is found in the membrane. Its function is as follows. Mediates response to the active Hedgehog (Hh) protein signal in embryos, functioning upstream or at the level of patched (ptc). The sequence is that of Interference hedgehog from Drosophila mojavensis (Fruit fly).